The following is a 576-amino-acid chain: Sulfite reductase [NADPH] hemoprotein beta-component (576 aa).

Residues cysteine 435, cysteine 441, cysteine 480, and cysteine 484 each coordinate [4Fe-4S] cluster. Cysteine 484 is a binding site for siroheme.

Belongs to the nitrite and sulfite reductase 4Fe-4S domain family. In terms of assembly, alpha(8)-beta(8). The alpha component is a flavoprotein, the beta component is a hemoprotein. Requires siroheme as cofactor. [4Fe-4S] cluster is required as a cofactor.

It catalyses the reaction hydrogen sulfide + 3 NADP(+) + 3 H2O = sulfite + 3 NADPH + 4 H(+). It participates in sulfur metabolism; hydrogen sulfide biosynthesis; hydrogen sulfide from sulfite (NADPH route): step 1/1. In terms of biological role, component of the sulfite reductase complex that catalyzes the 6-electron reduction of sulfite to sulfide. This is one of several activities required for the biosynthesis of L-cysteine from sulfate. In Yersinia pseudotuberculosis serotype IB (strain PB1/+), this protein is Sulfite reductase [NADPH] hemoprotein beta-component.